The following is a 459-amino-acid chain: Putrescine aminotransferase (459 aa).

Pyridoxal 5'-phosphate is bound by residues 150 to 151 and glutamine 274; that span reads GT. Residue lysine 300 is modified to N6-(pyridoxal phosphate)lysine. Threonine 332 contacts pyridoxal 5'-phosphate.

It belongs to the class-III pyridoxal-phosphate-dependent aminotransferase family. Putrescine aminotransferase subfamily. Pyridoxal 5'-phosphate is required as a cofactor.

The catalysed reaction is an alkane-alpha,omega-diamine + 2-oxoglutarate = an omega-aminoaldehyde + L-glutamate. The enzyme catalyses putrescine + 2-oxoglutarate = 1-pyrroline + L-glutamate + H2O. It carries out the reaction cadaverine + 2-oxoglutarate = 5-aminopentanal + L-glutamate. It functions in the pathway amine and polyamine degradation; putrescine degradation; 4-aminobutanal from putrescine (transaminase route): step 1/1. Its function is as follows. Catalyzes the aminotransferase reaction from putrescine to 2-oxoglutarate, leading to glutamate and 4-aminobutanal, which spontaneously cyclizes to form 1-pyrroline. This is the first step in one of two pathways for putrescine degradation, where putrescine is converted into 4-aminobutanoate (gamma-aminobutyrate or GABA) via 4-aminobutanal. Also functions as a cadaverine transaminase in a a L-lysine degradation pathway to succinate that proceeds via cadaverine, glutarate and L-2-hydroxyglutarate. The sequence is that of Putrescine aminotransferase from Salmonella paratyphi A (strain ATCC 9150 / SARB42).